We begin with the raw amino-acid sequence, 372 residues long: GPN-loop GTPase 1 (372 aa).

At Ala2 the chain carries N-acetylalanine. Gly29–Thr34 is a binding site for GTP. Residues Gly86–Asn88 carry the Gly-Pro-Asn (GPN)-loop; involved in dimer interface motif. GTP is bound at residue Asn189–Asp192. Phosphoserine occurs at positions 301 and 314. Residues Ala303–Lys372 are disordered. At Thr328 the chain carries Phosphothreonine. Residues Asp330 to Asp342 show a composition bias toward acidic residues. Ser338 carries the phosphoserine modification. Thr340 is modified (phosphothreonine). Residues Ile343–Pro355 show a composition bias toward basic and acidic residues.

Belongs to the GPN-loop GTPase family. Heterodimer with GPN3. Binds to RNA polymerase II (RNAPII). Interacts directly with RNAPII subunits RPB4 and RPB7 and the CTD of RPB1. Interacts with XPA.

It is found in the cytoplasm. It localises to the nucleus. Small GTPase required for proper nuclear import of RNA polymerase II (RNAPII). May act at an RNAP assembly step prior to nuclear import. Forms an interface between the RNA polymerase II enzyme and chaperone/scaffolding proteins, suggesting that it is required to connect RNA polymerase II to regulators of protein complex formation. May be involved in nuclear localization of XPA. The protein is GPN-loop GTPase 1 of Mus musculus (Mouse).